A 74-amino-acid chain; its full sequence is Translation initiation factor IF-1 (74 aa).

The S1-like domain occupies 1 to 72 (MSKEDAIEME…NKGRITYRLK (72 aa)).

The protein belongs to the IF-1 family. In terms of assembly, component of the 30S ribosomal translation pre-initiation complex which assembles on the 30S ribosome in the order IF-2 and IF-3, IF-1 and N-formylmethionyl-tRNA(fMet); mRNA recruitment can occur at any time during PIC assembly.

The protein resides in the cytoplasm. Functionally, one of the essential components for the initiation of protein synthesis. Stabilizes the binding of IF-2 and IF-3 on the 30S subunit to which N-formylmethionyl-tRNA(fMet) subsequently binds. Helps modulate mRNA selection, yielding the 30S pre-initiation complex (PIC). Upon addition of the 50S ribosomal subunit IF-1, IF-2 and IF-3 are released leaving the mature 70S translation initiation complex. This is Translation initiation factor IF-1 from Synechococcus sp. (strain JA-2-3B'a(2-13)) (Cyanobacteria bacterium Yellowstone B-Prime).